The following is a 418-amino-acid chain: UDP-N-acetylglucosamine 1-carboxyvinyltransferase (418 aa).

Residue 23–24 (KN) coordinates phosphoenolpyruvate. Arginine 93 provides a ligand contact to UDP-N-acetyl-alpha-D-glucosamine. Aspartate 117 functions as the Proton donor in the catalytic mechanism. Positions 305 and 327 each coordinate UDP-N-acetyl-alpha-D-glucosamine.

Belongs to the EPSP synthase family. MurA subfamily.

The protein localises to the cytoplasm. It catalyses the reaction phosphoenolpyruvate + UDP-N-acetyl-alpha-D-glucosamine = UDP-N-acetyl-3-O-(1-carboxyvinyl)-alpha-D-glucosamine + phosphate. The protein operates within cell wall biogenesis; peptidoglycan biosynthesis. Cell wall formation. Adds enolpyruvyl to UDP-N-acetylglucosamine. This Mycobacterium leprae (strain TN) protein is UDP-N-acetylglucosamine 1-carboxyvinyltransferase.